The primary structure comprises 600 residues: Glutamine--fructose-6-phosphate aminotransferase [isomerizing] (600 aa).

Cys-2 functions as the Nucleophile; for GATase activity in the catalytic mechanism. One can recognise a Glutamine amidotransferase type-2 domain in the interval 2-217; it reads CGIVGYIGNE…DEELVIVRRD (216 aa). SIS domains follow at residues 283-422 and 452-590; these read IRAA…AAGK and IARD…VDKP. The active-site For Fru-6P isomerization activity is the Lys-595.

As to quaternary structure, homodimer.

It localises to the cytoplasm. It carries out the reaction D-fructose 6-phosphate + L-glutamine = D-glucosamine 6-phosphate + L-glutamate. Catalyzes the first step in hexosamine metabolism, converting fructose-6P into glucosamine-6P using glutamine as a nitrogen source. The polypeptide is Glutamine--fructose-6-phosphate aminotransferase [isomerizing] (Shouchella clausii (strain KSM-K16) (Alkalihalobacillus clausii)).